The sequence spans 186 residues: Probable GPI-anchored cupredoxin ARB_05732-1 (186 aa).

The signal sequence occupies residues 1-18; that stretch reads MVNMNILTTVALAGLAAA. His55 is a Cu cation binding site. A disulfide bridge links Cys66 with Cys104. An N-linked (GlcNAc...) asparagine glycan is attached at Asn87. Residues Cys98 and His103 each contribute to the Cu cation site. A disordered region spans residues 130-160; that stretch reads GAGNGQAPSRVNNGSSGSGTPTSGGAPAATS. The N-linked (GlcNAc...) asparagine glycan is linked to Asn142. Residues 143–160 are compositionally biased toward low complexity; that stretch reads GSSGSGTPTSGGAPAATS. The GPI-anchor amidated glycine moiety is linked to residue Gly153. Positions 154-186 are cleaved as a propeptide — removed in mature form; it reads GAPAATSPNAASSLTFSGAAALVAMGGAWIGLL.

The protein belongs to the multicopper oxidase family. Cu cation serves as cofactor.

It localises to the cell membrane. It is found in the secreted. In terms of biological role, probable electron transfer copper protein that serves as a direct electron donor. The protein is Probable GPI-anchored cupredoxin ARB_05732-1 of Arthroderma benhamiae (strain ATCC MYA-4681 / CBS 112371) (Trichophyton mentagrophytes).